A 209-amino-acid chain; its full sequence is Large ribosomal subunit protein eL13 (209 aa).

Belongs to the eukaryotic ribosomal protein eL13 family. Component of the 60S large ribosomal subunit (LSU).

The protein resides in the cytoplasm. Its function is as follows. Component of the ribosome, a large ribonucleoprotein complex responsible for the synthesis of proteins in the cell. The small ribosomal subunit (SSU) binds messenger RNAs (mRNAs) and translates the encoded message by selecting cognate aminoacyl-transfer RNA (tRNA) molecules. The large subunit (LSU) contains the ribosomal catalytic site termed the peptidyl transferase center (PTC), which catalyzes the formation of peptide bonds, thereby polymerizing the amino acids delivered by tRNAs into a polypeptide chain. The nascent polypeptides leave the ribosome through a tunnel in the LSU and interact with protein factors that function in enzymatic processing, targeting, and the membrane insertion of nascent chains at the exit of the ribosomal tunnel. As part of the LSU, it is probably required for its formation and the maturation of rRNAs. This is Large ribosomal subunit protein eL13 (rpl13) from Dictyostelium discoideum (Social amoeba).